The primary structure comprises 370 residues: Probable phosphoserine aminotransferase (370 aa).

Residue Arg-45 participates in L-glutamate binding. Residues 79–80, Trp-105, Thr-154, Asp-175, and Gln-198 contribute to the pyridoxal 5'-phosphate site; that span reads GT. Lys-199 carries the N6-(pyridoxal phosphate)lysine modification. 240-241 is a binding site for pyridoxal 5'-phosphate; it reads NT.

The protein belongs to the class-V pyridoxal-phosphate-dependent aminotransferase family. SerC subfamily. In terms of assembly, homodimer. It depends on pyridoxal 5'-phosphate as a cofactor.

It catalyses the reaction O-phospho-L-serine + 2-oxoglutarate = 3-phosphooxypyruvate + L-glutamate. The catalysed reaction is 4-(phosphooxy)-L-threonine + 2-oxoglutarate = (R)-3-hydroxy-2-oxo-4-phosphooxybutanoate + L-glutamate. It functions in the pathway amino-acid biosynthesis; L-serine biosynthesis; L-serine from 3-phospho-D-glycerate: step 2/3. It participates in cofactor biosynthesis; pyridoxine 5'-phosphate biosynthesis; pyridoxine 5'-phosphate from D-erythrose 4-phosphate: step 3/5. Functionally, catalyzes the reversible conversion of 3-phosphohydroxypyruvate to phosphoserine and of 3-hydroxy-2-oxo-4-phosphonooxybutanoate to phosphohydroxythreonine. This is Probable phosphoserine aminotransferase from Caenorhabditis elegans.